Reading from the N-terminus, the 483-residue chain is Glutamyl-tRNA(Gln) amidotransferase subunit A (483 aa).

Residues K75 and S150 each act as charge relay system in the active site. The Acyl-ester intermediate role is filled by S174.

This sequence belongs to the amidase family. GatA subfamily. In terms of assembly, heterotrimer of A, B and C subunits.

The catalysed reaction is L-glutamyl-tRNA(Gln) + L-glutamine + ATP + H2O = L-glutaminyl-tRNA(Gln) + L-glutamate + ADP + phosphate + H(+). Its function is as follows. Allows the formation of correctly charged Gln-tRNA(Gln) through the transamidation of misacylated Glu-tRNA(Gln) in organisms which lack glutaminyl-tRNA synthetase. The reaction takes place in the presence of glutamine and ATP through an activated gamma-phospho-Glu-tRNA(Gln). This Microcystis aeruginosa (strain NIES-843 / IAM M-2473) protein is Glutamyl-tRNA(Gln) amidotransferase subunit A.